Reading from the N-terminus, the 213-residue chain is 3,4-dihydroxy-2-butanone 4-phosphate synthase (213 aa).

Residues R37–E38, D42, R150–T154, and E174 contribute to the D-ribulose 5-phosphate site. E38 is a Mg(2+) binding site. H153 is a Mg(2+) binding site.

Belongs to the DHBP synthase family. As to quaternary structure, homodimer. Requires Mg(2+) as cofactor. The cofactor is Mn(2+).

It carries out the reaction D-ribulose 5-phosphate = (2S)-2-hydroxy-3-oxobutyl phosphate + formate + H(+). The protein operates within cofactor biosynthesis; riboflavin biosynthesis; 2-hydroxy-3-oxobutyl phosphate from D-ribulose 5-phosphate: step 1/1. Its function is as follows. Catalyzes the conversion of D-ribulose 5-phosphate to formate and 3,4-dihydroxy-2-butanone 4-phosphate. The protein is 3,4-dihydroxy-2-butanone 4-phosphate synthase of Buchnera aphidicola subsp. Schizaphis graminum (strain Sg).